We begin with the raw amino-acid sequence, 362 residues long: Carbamoyl phosphate synthase small chain (362 aa).

The tract at residues 1-169 (MGKRLLILED…TKTAYPAPGV (169 aa)) is CPSase. L-glutamine is bound by residues Ser-46, Gly-220, and Gly-222. The 187-residue stretch at 172–358 (NIVLVDFGLK…LELIDAFQLE (187 aa)) folds into the Glutamine amidotransferase type-1 domain. Cys-247 serves as the catalytic Nucleophile. Residues Met-248, Gln-251, Asn-289, Gly-291, and Tyr-292 each coordinate L-glutamine. Catalysis depends on residues His-331 and Asp-333.

Belongs to the CarA family. Composed of two chains; the small (or glutamine) chain promotes the hydrolysis of glutamine to ammonia, which is used by the large (or ammonia) chain to synthesize carbamoyl phosphate. Tetramer of heterodimers (alpha,beta)4.

The catalysed reaction is hydrogencarbonate + L-glutamine + 2 ATP + H2O = carbamoyl phosphate + L-glutamate + 2 ADP + phosphate + 2 H(+). It carries out the reaction L-glutamine + H2O = L-glutamate + NH4(+). Its pathway is amino-acid biosynthesis; L-arginine biosynthesis; carbamoyl phosphate from bicarbonate: step 1/1. It participates in pyrimidine metabolism; UMP biosynthesis via de novo pathway; (S)-dihydroorotate from bicarbonate: step 1/3. In terms of biological role, small subunit of the glutamine-dependent carbamoyl phosphate synthetase (CPSase). CPSase catalyzes the formation of carbamoyl phosphate from the ammonia moiety of glutamine, carbonate, and phosphate donated by ATP, constituting the first step of 2 biosynthetic pathways, one leading to arginine and/or urea and the other to pyrimidine nucleotides. The small subunit (glutamine amidotransferase) binds and cleaves glutamine to supply the large subunit with the substrate ammonia. This chain is Carbamoyl phosphate synthase small chain, found in Streptococcus mutans serotype c (strain ATCC 700610 / UA159).